Consider the following 421-residue polypeptide: NADH-quinone oxidoreductase subunit F 2 (421 aa).

NAD(+) is bound at residue 53–62 (GRGGAGFPTG). Residue 165–212 (GAGAYICGEETAMLESLEGKRAQPRLKPPFPAVAGLYASPTVINNVET) participates in FMN binding. The [4Fe-4S] cluster site is built by Cys-342, Cys-345, Cys-348, and Cys-388.

It belongs to the complex I 51 kDa subunit family. Requires FMN as cofactor. [4Fe-4S] cluster serves as cofactor.

The catalysed reaction is a quinone + NADH + 5 H(+)(in) = a quinol + NAD(+) + 4 H(+)(out). Functionally, NDH-1 shuttles electrons from NADH, via FMN and iron-sulfur (Fe-S) centers, to quinones in the respiratory chain. The immediate electron acceptor for the enzyme in this species is believed to be ubiquinone. Couples the redox reaction to proton translocation (for every two electrons transferred, four hydrogen ions are translocated across the cytoplasmic membrane), and thus conserves the redox energy in a proton gradient. The polypeptide is NADH-quinone oxidoreductase subunit F 2 (nuoF2) (Rhizobium meliloti (strain 1021) (Ensifer meliloti)).